Consider the following 214-residue polypeptide: uncharacterized protein (214 aa).

An N-terminal signal peptide occupies residues 1–24 (MVTPHGILLLTITAAASLLWITFA). The tract at residues 99 to 121 (APNDTQEQNSTRNKRDSESYTAT) is disordered. The segment covering 100–109 (PNDTQEQNST) has biased composition (polar residues).

As to expression, component of the acid-insoluble and acid-soluble organic matrix of the aragonitic skeleton (at protein level).

Its subcellular location is the secreted. This is an uncharacterized protein from Acropora millepora (Staghorn coral).